A 117-amino-acid chain; its full sequence is Ribonuclease P protein component (117 aa).

This sequence belongs to the RnpA family. As to quaternary structure, consists of a catalytic RNA component (M1 or rnpB) and a protein subunit.

The enzyme catalyses Endonucleolytic cleavage of RNA, removing 5'-extranucleotides from tRNA precursor.. Its function is as follows. RNaseP catalyzes the removal of the 5'-leader sequence from pre-tRNA to produce the mature 5'-terminus. It can also cleave other RNA substrates such as 4.5S RNA. The protein component plays an auxiliary but essential role in vivo by binding to the 5'-leader sequence and broadening the substrate specificity of the ribozyme. The chain is Ribonuclease P protein component from Limosilactobacillus reuteri subsp. reuteri (strain JCM 1112) (Lactobacillus reuteri).